A 257-amino-acid chain; its full sequence is DNA repair protein RecO (257 aa).

The protein belongs to the RecO family.

Functionally, involved in DNA repair and RecF pathway recombination. This Streptococcus thermophilus (strain CNRZ 1066) protein is DNA repair protein RecO.